We begin with the raw amino-acid sequence, 526 residues long: Bifunctional purine biosynthesis protein PurH (526 aa).

In terms of domain architecture, MGS-like spans 1–147 (MSVIKRALIS…KNWKHVAIVT (147 aa)).

Belongs to the PurH family.

The catalysed reaction is (6R)-10-formyltetrahydrofolate + 5-amino-1-(5-phospho-beta-D-ribosyl)imidazole-4-carboxamide = 5-formamido-1-(5-phospho-D-ribosyl)imidazole-4-carboxamide + (6S)-5,6,7,8-tetrahydrofolate. It catalyses the reaction IMP + H2O = 5-formamido-1-(5-phospho-D-ribosyl)imidazole-4-carboxamide. It participates in purine metabolism; IMP biosynthesis via de novo pathway; 5-formamido-1-(5-phospho-D-ribosyl)imidazole-4-carboxamide from 5-amino-1-(5-phospho-D-ribosyl)imidazole-4-carboxamide (10-formyl THF route): step 1/1. The protein operates within purine metabolism; IMP biosynthesis via de novo pathway; IMP from 5-formamido-1-(5-phospho-D-ribosyl)imidazole-4-carboxamide: step 1/1. This chain is Bifunctional purine biosynthesis protein PurH, found in Neisseria gonorrhoeae (strain ATCC 700825 / FA 1090).